The following is a 184-amino-acid chain: MAEPQPPSGGLTDEAALSCCSDADPSTKDFLLQQTMLRVKDPKKSLDFYTRVLGMTLIQKCDFPIMKFSLYFLAYEDKNDIPKEKDEKIAWALSRKATLELTHNWGTEDDETQSYHNGNSDPRGFGHIGIAVPDVYSACKRFEELGVKFVKKPDDGKMKGLAFIQDPDGYWIEILNPNKMATLM.

Position 2 is an N-acetylalanine (alanine 2). A disulfide bond links cysteine 19 and cysteine 20. Positions 31–177 (LLQQTMLRVK…DGYWIEILNP (147 aa)) constitute a VOC domain. The substrate site is built by glutamine 34 and arginine 38. Glutamine 34 serves as a coordination point for Zn(2+). Cysteine 61 and cysteine 139 form a disulfide bridge. Lysine 88 is modified (N6-succinyllysine). Glutamate 100 is a Zn(2+) binding site. Asparagine 104 is a substrate binding site. Threonine 107 carries the post-translational modification Phosphothreonine. Substrate is bound by residues arginine 123 and histidine 127. Histidine 127 contacts Zn(2+). Residue cysteine 139 is modified to S-glutathionyl cysteine; alternate. The residue at position 148 (lysine 148) is an N6-acetyllysine; alternate. Lysine 148 is modified (N6-succinyllysine; alternate). Residue 157–158 (KM) coordinates substrate. Residue glutamate 173 coordinates Zn(2+). Residue glutamate 173 is the Proton donor/acceptor of the active site.

This sequence belongs to the glyoxalase I family. Homodimer. It depends on Zn(2+) as a cofactor. In terms of processing, glutathionylation at Cys-139 inhibits enzyme activity. Phosphorylated at Thr-107 in the presence of CaMK2. However, this is a consensus site for phosphorylation by CK2 so phosphorylation may be mediated by CK2 rather than CaMK2. Phosphorylation is induced by TNF and suppresses the TNF-induced transcriptional activity of NF-kappa-B. Post-translationally, exists in a nitric oxide (NO)-modified form. The exact nature of the modification is unknown, but it suppresses the TNF-induced transcriptional activity of NF-kappa-B.

The catalysed reaction is (R)-S-lactoylglutathione = methylglyoxal + glutathione. It functions in the pathway secondary metabolite metabolism; methylglyoxal degradation; (R)-lactate from methylglyoxal: step 1/2. With respect to regulation, regulated by oxidation of Cys-139 in response to the redox state of the cell. Results in the alternative formation of cystine or glutathione-bound cysteine, the latter modification leading to reduced enzyme activity. Catalyzes the conversion of hemimercaptal, formed from methylglyoxal and glutathione, to S-lactoylglutathione. Involved in the regulation of TNF-induced transcriptional activity of NF-kappa-B. Required for normal osteoclastogenesis. This chain is Lactoylglutathione lyase (GLO1), found in Homo sapiens (Human).